A 356-amino-acid chain; its full sequence is MSQSGKNGLTYSDAGVDIDAGNLMVEKIKPHVRSTRRPGADGEIGGFGGLFDLKAAGFSDPVLVAANDGVGTKLKIAIDAGKHDTVGIDLVAMCVNDLVVQGAEPLFFLDYFATGKLDPDQGAAIVAGIAAGCREAGCALIGGETAEMPGMYSGGDYDLAGFAVGAAERGQLLPAGNIAEGDVILGLSSSGVHSNGYSLVRKIVSLSGLAWDAPAPFGDGTVADLLMTPTRIYVKPLLKAIRETGAIKALAHITGGGFPENIPRVLPKPLAAEIDLDAIKPPAVFSWLAKTGGVAANEMLRTFNCGVGMIAVVSAGEAEKVAAVLAREGETVFTLGRMVSRSEDAPGTIYKGNLAI.

It belongs to the AIR synthase family.

The protein localises to the cytoplasm. The catalysed reaction is 2-formamido-N(1)-(5-O-phospho-beta-D-ribosyl)acetamidine + ATP = 5-amino-1-(5-phospho-beta-D-ribosyl)imidazole + ADP + phosphate + H(+). It functions in the pathway purine metabolism; IMP biosynthesis via de novo pathway; 5-amino-1-(5-phospho-D-ribosyl)imidazole from N(2)-formyl-N(1)-(5-phospho-D-ribosyl)glycinamide: step 2/2. In Sinorhizobium medicae (strain WSM419) (Ensifer medicae), this protein is Phosphoribosylformylglycinamidine cyclo-ligase.